The following is a 216-amino-acid chain: Somatotropin (216 aa).

A signal peptide spans 1–26 (MAAGPRNSVLLAFALLCLPWPQEVGT). Residue histidine 45 participates in Zn(2+) binding. Cysteines 78 and 189 form a disulfide. Position 131 is a phosphoserine (serine 131). Glutamate 198 provides a ligand contact to Zn(2+). Residues cysteine 206 and cysteine 214 are joined by a disulfide bond.

The protein belongs to the somatotropin/prolactin family.

The protein resides in the secreted. Functionally, plays an important role in growth control. Its major role in stimulating body growth is to stimulate the liver and other tissues to secrete IGF1. It stimulates both the differentiation and proliferation of myoblasts. It also stimulates amino acid uptake and protein synthesis in muscle and other tissues. The polypeptide is Somatotropin (GH1) (Felis catus (Cat)).